Here is a 466-residue protein sequence, read N- to C-terminus: Asparagine--tRNA ligase (466 aa).

The protein belongs to the class-II aminoacyl-tRNA synthetase family. Homodimer.

The protein localises to the cytoplasm. It catalyses the reaction tRNA(Asn) + L-asparagine + ATP = L-asparaginyl-tRNA(Asn) + AMP + diphosphate + H(+). This is Asparagine--tRNA ligase from Aliivibrio fischeri (strain ATCC 700601 / ES114) (Vibrio fischeri).